An 872-amino-acid polypeptide reads, in one-letter code: MESLLGFLALLLLWGAVAEGPAKKVLTLEGDLVLGGLFPVHQKGGPAEECGPVNEHRGIQRLEAMLFALDRINRDPHLLPGVRLGAHILDSCSKDTHALEQALDFVRASLSRGADGSRHICPDGSYATHSDAPTAVTGVIGGSYSDVSIQVANLLRLFQIPQISYASTSAKLSDKSRYDYFARTVPPDFFQAKAMAEILRFFNWTYVSTVASEGDYGETGIEAFELEARARNICVATSEKVGRAMSRAAFEGVVRALLQKPSARVAVLFTRSEDARELLAATQRLNASFTWVASDGWGALESVVAGSERAAEGAITIELASYPISDFASYFQSLDPWNNSRNPWFREFWEERFHCSFRQRDCAAHSLRAVPFEQESKIMFVVNAVYAMAHALHNMHRALCPNTTHLCDAMRPVNGRRLYKDFVLNVKFDAPFRPADTDDEVRFDRFGDGIGRYNIFTYLRAGSGRYRYQKVGYWAEGLTLDTSFIPWASPSAGPLPASRCSEPCLQNEVKSVQPGEVCCWLCIPCQPYEYRLDEFTCADCGLGYWPNASLTGCFELPQEYIRWGDAWAVGPVTIACLGALATLFVLGVFVRHNATPVVKASGRELCYILLGGVFLCYCMTFVFIAKPSTAVCTLRRLGLGTAFSVCYSALLTKTNRIARIFGGAREGAQRPRFISPASQVAICLALISGQLLIVAAWLVVEAPGTGKETAPERREVVTLRCNHRDASMLGSLAYNVLLIALCTLYAFKTRKCPENFNEAKFIGFTMYTTCIIWLAFLPIFYVTSSDYRVQTTTMCVSVSLSGSVVLGCLFAPKLHIILFQPQKNVVSHRAPTSRFGSAAPRASANLGQGSGSQFVPTVCNGREVVDSTTSSL.

A signal peptide spans Met-1 to Ala-18. At Glu-19 to Trp-567 the chain is on the extracellular side. Cys-50 and Cys-92 are joined by a disulfide. 5 residues coordinate L-glutamate: Arg-57, Arg-61, Ser-145, Ala-166, and Thr-168. Residues Asn-203 and Asn-286 are each glycosylated (N-linked (GlcNAc...) asparagine). 7 cysteine pairs are disulfide-bonded: Cys-234–Cys-518, Cys-355–Cys-362, Cys-400–Cys-407, Cys-500–Cys-519, Cys-504–Cys-522, Cys-525–Cys-537, and Cys-540–Cys-553. Asp-295 is a binding site for L-glutamate. N-linked (GlcNAc...) asparagine glycosylation is present at Asn-338. Lys-377 serves as a coordination point for L-glutamate. Residue Asn-402 is glycosylated (N-linked (GlcNAc...) asparagine). A glycan (N-linked (GlcNAc...) asparagine) is linked at Asn-547. The chain crosses the membrane as a helical span at residues Ala-568–Val-590. Residues Arg-591 to Glu-604 lie on the Cytoplasmic side of the membrane. The chain crosses the membrane as a helical span at residues Leu-605–Ala-625. At Lys-626 to Arg-636 the chain is on the extracellular side. Cys-632 and Cys-721 are disulfide-bonded. A helical membrane pass occupies residues Leu-637–Asn-655. Topologically, residues Arg-656–Gln-679 are cytoplasmic. Residues Ala-677–Ala-685 are important for interaction with HTR2A. A helical transmembrane segment spans residues Val-680–Val-700. Over Glu-701–Asp-725 the chain is Extracellular. Residues Ala-726–Phe-747 traverse the membrane as a helical segment. The Cytoplasmic segment spans residues Lys-748–Lys-760. The chain crosses the membrane as a helical span at residues Phe-761 to Thr-783. Over Ser-784 to Thr-793 the chain is Extracellular. A helical membrane pass occupies residues Met-794–Phe-819. The Cytoplasmic portion of the chain corresponds to Gln-820–Leu-872.

It belongs to the G-protein coupled receptor 3 family. In terms of assembly, forms heterodimers with GRM3 or GRM4. Interacts with GNAI1. Interacts with TAMALIN. Interacts with HTR2A. Is widely distributed in the CNS and prominent expression is seen in Golgi cells of the cerebellum and some particular neuronal cells in other brain regions.

It is found in the cell membrane. Its subcellular location is the synapse. The protein resides in the cell projection. It localises to the dendrite. Its function is as follows. Dimeric G protein-coupled receptor which is activated by the excitatory neurotransmitter L-glutamate. Plays critical roles in modulating synaptic transmission and neuronal excitability. Upon activation by glutamate, inhibits presynaptic calcium channels, reducing further glutamate release and dampening excitatory signaling. Mechanistically, ligand binding causes a conformation change that triggers signaling via guanine nucleotide-binding proteins (G proteins) and modulates the activity of down-stream effectors, such as adenylate cyclase. May mediate suppression of neurotransmission or may be involved in synaptogenesis or synaptic stabilization. The protein is Metabotropic glutamate receptor 2 (Grm2) of Rattus norvegicus (Rat).